Here is a 462-residue protein sequence, read N- to C-terminus: Ribosomal protein uS12 methylthiotransferase RimO (462 aa).

The 116-residue stretch at 10 to 125 (PRIGMVSLGC…VLDAVHRNLP (116 aa)) folds into the MTTase N-terminal domain. 6 residues coordinate [4Fe-4S] cluster: C19, C55, C84, C160, C164, and C167. The 243-residue stretch at 146–388 (LTPRHYAYLK…AVAEALSSAK (243 aa)) folds into the Radical SAM core domain. The TRAM domain occupies 390–462 (QRRVGATMQV…RGHDLLAQPI (73 aa)).

It belongs to the methylthiotransferase family. RimO subfamily. The cofactor is [4Fe-4S] cluster.

It localises to the cytoplasm. The catalysed reaction is L-aspartate(89)-[ribosomal protein uS12]-hydrogen + (sulfur carrier)-SH + AH2 + 2 S-adenosyl-L-methionine = 3-methylsulfanyl-L-aspartate(89)-[ribosomal protein uS12]-hydrogen + (sulfur carrier)-H + 5'-deoxyadenosine + L-methionine + A + S-adenosyl-L-homocysteine + 2 H(+). Functionally, catalyzes the methylthiolation of an aspartic acid residue of ribosomal protein uS12. In Verminephrobacter eiseniae (strain EF01-2), this protein is Ribosomal protein uS12 methylthiotransferase RimO.